The following is a 38-amino-acid chain: Turripeptide GpIAa (38 aa).

This sequence belongs to the turripeptide family. Expressed by the venom duct.

Its subcellular location is the secreted. The polypeptide is Turripeptide GpIAa (Cryptogemma periscelida (Atlantic gem-turris)).